The following is a 146-amino-acid chain: D-aminoacyl-tRNA deacylase (146 aa).

The Gly-cisPro motif, important for rejection of L-amino acids motif lies at 137–138 (GP).

This sequence belongs to the DTD family. In terms of assembly, homodimer.

Its subcellular location is the cytoplasm. It catalyses the reaction glycyl-tRNA(Ala) + H2O = tRNA(Ala) + glycine + H(+). The enzyme catalyses a D-aminoacyl-tRNA + H2O = a tRNA + a D-alpha-amino acid + H(+). Its function is as follows. An aminoacyl-tRNA editing enzyme that deacylates mischarged D-aminoacyl-tRNAs. Also deacylates mischarged glycyl-tRNA(Ala), protecting cells against glycine mischarging by AlaRS. Acts via tRNA-based rather than protein-based catalysis; rejects L-amino acids rather than detecting D-amino acids in the active site. By recycling D-aminoacyl-tRNA to D-amino acids and free tRNA molecules, this enzyme counteracts the toxicity associated with the formation of D-aminoacyl-tRNA entities in vivo and helps enforce protein L-homochirality. In Cellvibrio japonicus (strain Ueda107) (Pseudomonas fluorescens subsp. cellulosa), this protein is D-aminoacyl-tRNA deacylase.